Reading from the N-terminus, the 196-residue chain is MLQEHFFLSEDVITLAQQLLGHKLITTHEGLITSGYIVETEAYRGPDDKACHAYNYRKTQRNRAMYLKGGSAYLYRCYGMHHLLNVVTGPEDIPHAVLIRAILPDQGKELMIQRRQWRDKPPHLLTNGPGKVCQALGISLENNRQRLNTPALYISKEKISGTLTATARIGIDYAQEYRDVPWRFLLSPEDSGKVLS.

Belongs to the DNA glycosylase MPG family.

In Chlamydia pneumoniae (Chlamydophila pneumoniae), this protein is Putative 3-methyladenine DNA glycosylase.